Here is a 411-residue protein sequence, read N- to C-terminus: Putative competence-damage inducible protein (411 aa).

It belongs to the CinA family.

This Caldicellulosiruptor bescii (strain ATCC BAA-1888 / DSM 6725 / KCTC 15123 / Z-1320) (Anaerocellum thermophilum) protein is Putative competence-damage inducible protein.